The following is a 761-amino-acid chain: 1,2-alpha-glucosylglycerol phosphorylase (761 aa).

327 to 328 contributes to the glycerol binding site; that stretch reads YQ. 333 to 334 lines the substrate pocket; the sequence is WD. Glu-475 acts as the Proton donor in catalysis. 587-588 serves as a coordination point for substrate; the sequence is KQ.

It belongs to the glycosyl hydrolase 65 family. In terms of assembly, homodimer.

It carries out the reaction 2-O-(alpha-D-glucopyranosyl)glycerol + phosphate = beta-D-glucose 1-phosphate + glycerol. Functionally, catalyzes both the (1) reversible phosphorolysis of 2-O-alpha-D-glucopyranosyl-sn-glycerol (GG) from beta-D-glucose 1-phosphate (betaGlc1P) and glycerol and (2) the hydrolysis of betaGlc1P. the betaGlc1P hydrolysis is a glucosyl-transfer reaction to an acceptor water molecule that produces an anomer-inverted alpha-glucose, not a phosphatase-type reaction. In the absence of glycerol produces alpha-D-glucopyranose and phosphate from beta-D-glucopyranose 1-phosphate. The sequence is that of 1,2-alpha-glucosylglycerol phosphorylase from Bacillus selenitireducens (strain ATCC 700615 / DSM 15326 / MLS10).